Here is a 561-residue protein sequence, read N- to C-terminus: Probable oligo-1,6-glucosidase 2 (561 aa).

Residue Asp199 is the Nucleophile of the active site. Glu255 serves as the catalytic Proton donor.

It belongs to the glycosyl hydrolase 13 family.

It localises to the cytoplasm. It carries out the reaction Hydrolysis of (1-&gt;6)-alpha-D-glucosidic linkages in some oligosaccharides produced from starch and glycogen by alpha-amylase, and in isomaltose.. This Bacillus subtilis (strain 168) protein is Probable oligo-1,6-glucosidase 2 (ycdG).